Reading from the N-terminus, the 245-residue chain is tRNA1(Val) (adenine(37)-N6)-methyltransferase (245 aa).

The protein belongs to the methyltransferase superfamily. tRNA (adenine-N(6)-)-methyltransferase family.

The protein localises to the cytoplasm. It catalyses the reaction adenosine(37) in tRNA1(Val) + S-adenosyl-L-methionine = N(6)-methyladenosine(37) in tRNA1(Val) + S-adenosyl-L-homocysteine + H(+). Functionally, specifically methylates the adenine in position 37 of tRNA(1)(Val) (anticodon cmo5UAC). This is tRNA1(Val) (adenine(37)-N6)-methyltransferase from Salmonella paratyphi A (strain ATCC 9150 / SARB42).